Consider the following 64-residue polypeptide: Sec-independent protein translocase protein TatA (64 aa).

The helical transmembrane segment at 10–30 (LVLILGIALIIFGPGKLPELG) threads the bilayer.

The protein belongs to the TatA/E family. In terms of assembly, forms a complex with TatC.

Its subcellular location is the cell membrane. In terms of biological role, part of the twin-arginine translocation (Tat) system that transports large folded proteins containing a characteristic twin-arginine motif in their signal peptide across membranes. TatA could form the protein-conducting channel of the Tat system. The protein is Sec-independent protein translocase protein TatA of Alkaliphilus oremlandii (strain OhILAs) (Clostridium oremlandii (strain OhILAs)).